The primary structure comprises 199 residues: DNA dC-&gt;dU-editing enzyme APOBEC-3A (199 aa).

The CMP/dCMP-type deaminase domain occupies 27-143; it reads GRHKTYLCYE…PLYKEALQML (117 aa). Position 70 (H70) interacts with Zn(2+). Catalysis depends on E72, which acts as the Proton donor. Zn(2+) contacts are provided by C101 and C106.

It belongs to the cytidine and deoxycytidylate deaminase family. As to quaternary structure, interacts with AGO2. Interacts with TRIB3 (via N-terminus). It depends on Zn(2+) as a cofactor. As to expression, expressed in peripheral leukocytes with higher expression in CD14-positive phagocytic cells. Highly expressed in keratinocytes and in periphery blood monocytes. Also detected in non-lymphoid tissues including lung and adipose tissues. Found at high levels in colorectal adenocarcinoma, Burkitt's lymphoma and chronic myelogenous leukemia.

It localises to the nucleus. The protein localises to the cytoplasm. The catalysed reaction is a 2'-deoxycytidine in single-stranded DNA + H2O + H(+) = a 2'-deoxyuridine in single-stranded DNA + NH4(+). In terms of biological role, DNA deaminase (cytidine deaminase) with restriction activity against viruses, foreign DNA and mobility of retrotransposons. Exhibits antiviral activity against adeno-associated virus (AAV) and human T-cell leukemia virus type 1 (HTLV-1) and may inhibit the mobility of LTR and non-LTR retrotransposons. Selectively targets single-stranded DNA and can deaminate both methylcytosine and cytosine in foreign DNA. Can induce somatic hypermutation in the nuclear and mitochondrial DNA. May also play a role in the epigenetic regulation of gene expression through the process of active DNA demethylation. The chain is DNA dC-&gt;dU-editing enzyme APOBEC-3A (APOBEC3A) from Homo sapiens (Human).